Consider the following 373-residue polypeptide: 3 beta-hydroxysteroid dehydrogenase/Delta 5--&gt;4-isomerase type 1 (373 aa).

Residues Gly-10–Leu-15, Tyr-155, and Lys-159 each bind NADP(+). The active-site Proton donor is Lys-159. Residues Leu-288–Ile-308 traverse the membrane as a helical segment.

Belongs to the 3-beta-HSD family. As to expression, placenta and skin. Predominantly expressed in mammary gland tissue.

Its subcellular location is the endoplasmic reticulum membrane. It is found in the mitochondrion membrane. The enzyme catalyses a 3beta-hydroxy-Delta(5)-steroid + NAD(+) = a 3-oxo-Delta(5)-steroid + NADH + H(+). It carries out the reaction pregnenolone + NAD(+) = pregn-5-ene-3,20-dione + NADH + H(+). The catalysed reaction is 3beta-hydroxyandrost-5-en-17-one + NAD(+) = androst-5-ene-3,17-dione + NADH + H(+). It catalyses the reaction androst-5-en-3beta,17beta-diol + NAD(+) = 17beta-hydroxy-androst-5-en-3-one + NADH + H(+). The enzyme catalyses a 3beta-hydroxysteroid + NADP(+) = a 3-oxosteroid + NADPH + H(+). It carries out the reaction 5alpha-androstane-3beta,17beta-diol + NADP(+) = 17beta-hydroxy-5alpha-androstan-3-one + NADPH + H(+). The catalysed reaction is 3beta-hydroxy-5alpha-androstan-17-one + NADP(+) = 5alpha-androstan-3,17-dione + NADPH + H(+). It catalyses the reaction a 3-oxo-Delta(5)-steroid = a 3-oxo-Delta(4)-steroid. The enzyme catalyses pregn-5-ene-3,20-dione = progesterone. It carries out the reaction androst-5-ene-3,17-dione = androst-4-ene-3,17-dione. The catalysed reaction is 17beta-hydroxy-androst-5-en-3-one = testosterone. It catalyses the reaction 5alpha-androstane-3beta,17beta-diol + NAD(+) = 17beta-hydroxy-5alpha-androstan-3-one + NADH + H(+). It functions in the pathway steroid hormone biosynthesis. The protein operates within steroid metabolism. Its function is as follows. A bifunctional enzyme responsible for the oxidation and isomerization of 3beta-hydroxy-Delta(5)-steroid precursors to 3-oxo-Delta(4)-steroids, an essential step in steroid hormone biosynthesis. Specifically catalyzes the conversion of pregnenolone to progesterone, 17alpha-hydroxypregnenolone to 17alpha-hydroxyprogesterone, dehydroepiandrosterone (DHEA) to 4-androstenedione, and androstenediol to testosterone. Additionally, catalyzes the interconversion between 3beta-hydroxy and 3-oxo-5alpha-androstane steroids controlling the bioavalability of the active forms. Specifically converts dihydrotestosterone to its inactive form 5alpha-androstanediol, that does not bind androgen receptor/AR. Also converts androstanedione, a precursor of testosterone and estrone, to epiandrosterone. Expected to use NAD(+) as preferred electron donor for the 3beta-hydroxy-steroid dehydrogenase activity and NADPH for the 3-ketosteroid reductase activity. The sequence is that of 3 beta-hydroxysteroid dehydrogenase/Delta 5--&gt;4-isomerase type 1 from Homo sapiens (Human).